A 151-amino-acid chain; its full sequence is Small ribosomal subunit protein uS15y (151 aa).

Belongs to the universal ribosomal protein uS15 family.

This chain is Small ribosomal subunit protein uS15y (RPS13B), found in Arabidopsis thaliana (Mouse-ear cress).